The following is a 343-amino-acid chain: Selenide, water dikinase (343 aa).

U15 is a catalytic residue. Residue U15 is a non-standard amino acid, selenocysteine. ATP-binding positions include K18 and 45–47 (TAD). A Mg(2+)-binding site is contributed by D48. ATP is bound by residues D65, D88, and 135–137 (GHT). Residue D88 participates in Mg(2+) binding. D223 lines the Mg(2+) pocket.

It belongs to the selenophosphate synthase 1 family. Class I subfamily. As to quaternary structure, homodimer. Mg(2+) is required as a cofactor.

It catalyses the reaction hydrogenselenide + ATP + H2O = selenophosphate + AMP + phosphate + 2 H(+). Synthesizes selenophosphate from selenide and ATP. The sequence is that of Selenide, water dikinase from Carboxydothermus hydrogenoformans (strain ATCC BAA-161 / DSM 6008 / Z-2901).